We begin with the raw amino-acid sequence, 165 residues long: Nucleotide-binding protein Ctha_0558 (165 aa).

It belongs to the YajQ family.

Functionally, nucleotide-binding protein. The polypeptide is Nucleotide-binding protein Ctha_0558 (Chloroherpeton thalassium (strain ATCC 35110 / GB-78)).